The following is a 387-amino-acid chain: Acyl-[acyl-carrier-protein] 6-desaturase (387 aa).

Residues 1–29 constitute a chloroplast transit peptide; sequence MALVFKSIGAHKTPPCTLNLASPALYHTR. The Fe cation site is built by Glu-131, Glu-169, His-172, Glu-222, Glu-255, and His-258.

This sequence belongs to the fatty acid desaturase type 2 family. Fe(2+) serves as cofactor.

Its subcellular location is the plastid. It is found in the chloroplast. The catalysed reaction is hexadecanoyl-[ACP] + 2 reduced [2Fe-2S]-[ferredoxin] + O2 + 2 H(+) = (6Z)-hexadecenoyl-[ACP] + 2 oxidized [2Fe-2S]-[ferredoxin] + 2 H2O. It functions in the pathway lipid metabolism; fatty acid metabolism. With respect to regulation, inhibited by KCN or H(2)O(2). In terms of biological role, delta(6) fatty acid desaturase introducing a cis double bond at carbon 6 of palmitoyl-[acyl-carrier protein](16:0-ACP), producing 16:1(6Z)-ACP. No activity with the coenzyme A ester of the fatty acid. The position of the double bond is determined by its distance from the carboxyl end of the fatty acid. Low activity with several saturated acyl-[acyl-carrier protein]s, including 14:0-ACP and 18:0-ACP. Requires reduced ferredoxin for detectable in vitro activity. The sequence is that of Acyl-[acyl-carrier-protein] 6-desaturase from Thunbergia alata (Black-eyed Susan vine).